The sequence spans 304 residues: Putative S-adenosyl-L-methionine-dependent methyltransferase MUL_0816 (304 aa).

S-adenosyl-L-methionine-binding positions include Asp-130 and Asp-159 to Leu-160.

It belongs to the UPF0677 family.

Its function is as follows. Exhibits S-adenosyl-L-methionine-dependent methyltransferase activity. In Mycobacterium ulcerans (strain Agy99), this protein is Putative S-adenosyl-L-methionine-dependent methyltransferase MUL_0816.